Here is a 219-residue protein sequence, read N- to C-terminus: Protein-L-isoaspartate O-methyltransferase 2 (219 aa).

The active site involves serine 60.

The protein belongs to the methyltransferase superfamily. L-isoaspartyl/D-aspartyl protein methyltransferase family.

The protein localises to the cytoplasm. The enzyme catalyses [protein]-L-isoaspartate + S-adenosyl-L-methionine = [protein]-L-isoaspartate alpha-methyl ester + S-adenosyl-L-homocysteine. Its function is as follows. Catalyzes the methyl esterification of L-isoaspartyl residues in peptides and proteins that result from spontaneous decomposition of normal L-aspartyl and L-asparaginyl residues. It plays a role in the repair and/or degradation of damaged proteins. The protein is Protein-L-isoaspartate O-methyltransferase 2 (pcm2) of Archaeoglobus fulgidus (strain ATCC 49558 / DSM 4304 / JCM 9628 / NBRC 100126 / VC-16).